The sequence spans 594 residues: Metastasis-associated protein MTA3 (594 aa).

Positions Met-1–Lys-147 constitute a BAH domain. Positions Gly-148–Gly-259 constitute an ELM2 domain. An SANT domain is found at Asp-266–Arg-318. A GATA-type; atypical zinc finger spans residues Cys-379 to Cys-406. Residues Ser-428 and Ser-430 each carry the phosphoserine modification. Thr-455 carries the phosphothreonine modification. Position 519 is a phosphoserine (Ser-519).

Belongs to the metastasis-associated protein family. In terms of assembly, component of the nucleosome remodeling and deacetylase (NuRD) repressor complex, composed of core proteins MTA1, MTA2, MTA3, RBBP4, RBBP7, HDAC1, HDAC2, MBD2, MBD3, and peripherally associated proteins CDK2AP1, CDK2AP2, GATAD2A, GATAD2B, CHD3, CHD4 and CHD5. The exact stoichiometry of the NuRD complex is unknown, and some subunits such as MBD2 and MBD3, GATAD2A and GATAD2B, and CHD3, CHD4 and CHD5 define mutually exclusive NuRD complexes. Interacts with BCL6. Interacts with NACC2. Interacts with PWWP2B. Expressed in germinal centers of lymphoid tissues. No expression in nonepithelial cells.

The protein localises to the nucleus. It localises to the cytoplasm. Acts as a component of the histone deacetylase NuRD complex which participates in the remodeling of chromatin. Plays a role in maintenance of the normal epithelial architecture through the repression of SNAI1 transcription in a histone deacetylase-dependent manner, and thus the regulation of E-cadherin levels. Contributes to transcriptional repression by BCL6. The sequence is that of Metastasis-associated protein MTA3 (MTA3) from Homo sapiens (Human).